A 162-amino-acid polypeptide reads, in one-letter code: MATIFFIQPITEEAEAYYPPSMITNKRKDLGVDVYCCSNLVLQPGLNIIPLHIKVACEHMGKKCGFKIMARSSMCTHERLLILANGIGLIDPGYVGELMLKIINLGDIPVQIWAKECLVQLVAQGDHVPDHINILKRNEIFPLFAPTPRGEGRFGSTGKAGL.

Belongs to the dUTPase family. In terms of assembly, homotrimer. Mg(2+) serves as cofactor.

The protein localises to the host cytoplasm. Its subcellular location is the virion. The catalysed reaction is dUTP + H2O = dUMP + diphosphate + H(+). Its function is as follows. The viral dUTPase may play a role in lowering the dUTP concentration in natural infections to minimize misincorporation of deoxyuridine into the viral DNA and ensure the fidelity of genome replication. The chain is Deoxyuridine 5'-triphosphate nucleotidohydrolase from Ornithodoros (relapsing fever ticks).